A 205-amino-acid polypeptide reads, in one-letter code: Transcriptional regulator GfcR (205 aa).

It belongs to the purine/pyrimidine phosphoribosyltransferase family. GfcR subfamily.

This chain is Transcriptional regulator GfcR, found in Methanococcus maripaludis (strain DSM 14266 / JCM 13030 / NBRC 101832 / S2 / LL).